A 161-amino-acid chain; its full sequence is UPF0262 protein Meso_0189 (161 aa).

Belongs to the UPF0262 family.

This is UPF0262 protein Meso_0189 from Chelativorans sp. (strain BNC1).